Here is a 464-residue protein sequence, read N- to C-terminus: Putative F-box/LRR-repeat protein At3g59160 (464 aa).

One can recognise an F-box domain in the interval 12 to 60 (KDMINDLPDALLCHVLSYLTTKEAASTSLLSRRWRYLLAFVPNLEFDDS). LRR repeat units lie at residues 172–198 (TLKI…HLES), 200–225 (MFDE…VLHH), 233–258 (SCSV…GMHE), 336–367 (VLCL…TIQS), 368–393 (TPKV…VFQG), and 408–433 (KIEK…VLHY).

The sequence is that of Putative F-box/LRR-repeat protein At3g59160 from Arabidopsis thaliana (Mouse-ear cress).